A 495-amino-acid chain; its full sequence is Inner membrane ALBINO3-like protein 1, chloroplastic (495 aa).

A helical transmembrane segment spans residues 76-96; the sequence is LGAIYVLADASASTAAAAVMP. Residues 97–206 are Stromal-facing; it reads TAVDSAAGAA…VLYEQAGVNP (110 aa). The helical transmembrane segment at 207–227 threads the bilayer; the sequence is LAGCLPTLATIPIFIGLFSSL. Residues 228–273 lie on the Lumenal side of the membrane; sequence TNVANDGLLDTQGFYFVPSLAGPTTMAMRQSGLGTSWLWPLGPDGA. Residues 274–294 traverse the membrane as a helical segment; sequence PPIGWEDAAAYLTLPLLLVAV. The Stromal segment spans residues 295-317; it reads QYASSSVTSPPIDPKDENANTQR. Residues 318 to 338 traverse the membrane as a helical segment; it reads ALLVFLPLMVGWFSLNVPAGL. Residues 339 to 441 are Lumenal-facing; the sequence is SLYYLANTVL…ASVSLSVDDS (103 aa). A helical membrane pass occupies residues 442–462; that stretch reads TAAIAGTATMAVTAGAPAAAM. The Stromal portion of the chain corresponds to 463–495; it reads DPSKVNRRCKRRRLTSLVQDGSTASAAVAGASA.

Belongs to the OXA1/ALB3/YidC (TC 2.A.9.2) family. In terms of assembly, associates with the LHCII complex and with the psaE subunit of the LHCI complex.

The protein localises to the plastid. It localises to the chloroplast thylakoid membrane. Required for the insertion of some light-harvesting complexes (LHC) proteins into the chloroplast thylakoid membrane. Essential for the assembly and activity of LHC I and II. Its function is probably partly distinct from that of ALB3.2. In Chlamydomonas reinhardtii (Chlamydomonas smithii), this protein is Inner membrane ALBINO3-like protein 1, chloroplastic (ALB3.1).